We begin with the raw amino-acid sequence, 190 residues long: 6,7-dimethyl-8-ribityllumazine synthase (190 aa).

5-amino-6-(D-ribitylamino)uracil is bound by residues W31, 65–67, and 89–91; these read SFE and CVI. (2S)-2-hydroxy-3-oxobutyl phosphate is bound at residue 94-95; that stretch reads ET. The active-site Proton donor is H97. 5-amino-6-(D-ribitylamino)uracil is bound at residue F122. R136 provides a ligand contact to (2S)-2-hydroxy-3-oxobutyl phosphate.

This sequence belongs to the DMRL synthase family.

The enzyme catalyses (2S)-2-hydroxy-3-oxobutyl phosphate + 5-amino-6-(D-ribitylamino)uracil = 6,7-dimethyl-8-(1-D-ribityl)lumazine + phosphate + 2 H2O + H(+). It functions in the pathway cofactor biosynthesis; riboflavin biosynthesis; riboflavin from 2-hydroxy-3-oxobutyl phosphate and 5-amino-6-(D-ribitylamino)uracil: step 1/2. Functionally, catalyzes the formation of 6,7-dimethyl-8-ribityllumazine by condensation of 5-amino-6-(D-ribitylamino)uracil with 3,4-dihydroxy-2-butanone 4-phosphate. This is the penultimate step in the biosynthesis of riboflavin. This chain is 6,7-dimethyl-8-ribityllumazine synthase, found in Flavobacterium johnsoniae (strain ATCC 17061 / DSM 2064 / JCM 8514 / BCRC 14874 / CCUG 350202 / NBRC 14942 / NCIMB 11054 / UW101) (Cytophaga johnsonae).